A 398-amino-acid polypeptide reads, in one-letter code: Cytochrome b (398 aa).

The helical transmembrane segment at 45-65 (LGSIAGIALVIQIITGVILAM) threads the bilayer. The heme b site is built by H95 and H109. The next 9 membrane-spanning stretches (helical) occupy residues 96-116 (AVGASMFFAAIYLHIARGLYY), 129-149 (IGIIIFLIMMATAFMGYVLPW), 164-184 (FSAIPLVGEPIVIWLWGGFSV), 192-212 (FFALHYLFPFIIVVLVILHLV), 245-265 (FVGFGVYFIIFAYFIFYAPNY), 277-297 (PLVTPAHIVPEWYFLPFYAIL), 304-324 (LGGVFLMFGSIVVLFLLPWLD), 339-359 (IAFWIFMADCLFLGYLGSKPV), and 366-386 (ISRFAVCYYFCHFLLVLPLIG). 2 residues coordinate heme b: H196 and H210.

This sequence belongs to the cytochrome b family. As to quaternary structure, the main subunits of complex b-c1 are: cytochrome b, cytochrome c1 and the Rieske protein. Heme b is required as a cofactor.

It localises to the cell membrane. Its function is as follows. Component of the ubiquinol-cytochrome c reductase complex (complex III or cytochrome b-c1 complex), which is a respiratory chain that generates an electrochemical potential coupled to ATP synthesis. This is Cytochrome b (petB) from Rickettsia prowazekii (strain Madrid E).